We begin with the raw amino-acid sequence, 36 residues long: Photosystem I reaction center subunit VIII (36 aa).

The helical transmembrane segment at 8–28 (SVLVPLVGLVFPAIAMASLFL) threads the bilayer.

This sequence belongs to the PsaI family.

Its subcellular location is the plastid. The protein localises to the chloroplast thylakoid membrane. Functionally, may help in the organization of the PsaL subunit. This is Photosystem I reaction center subunit VIII from Helianthus annuus (Common sunflower).